The sequence spans 353 residues: GTPase Obg (353 aa).

The 159-residue stretch at Met-1–Ile-159 folds into the Obg domain. One can recognise an OBG-type G domain in the interval Ala-160–Gly-327. GTP contacts are provided by residues Gly-166–Ser-173, Phe-191–His-195, Asp-212–Gly-215, Asn-279–Asp-282, and Ser-308–Val-310. Mg(2+) contacts are provided by Ser-173 and Thr-193.

The protein belongs to the TRAFAC class OBG-HflX-like GTPase superfamily. OBG GTPase family. In terms of assembly, monomer. Requires Mg(2+) as cofactor.

It is found in the cytoplasm. In terms of biological role, an essential GTPase which binds GTP, GDP and possibly (p)ppGpp with moderate affinity, with high nucleotide exchange rates and a fairly low GTP hydrolysis rate. Plays a role in control of the cell cycle, stress response, ribosome biogenesis and in those bacteria that undergo differentiation, in morphogenesis control. The sequence is that of GTPase Obg from Rhodopseudomonas palustris (strain ATCC BAA-98 / CGA009).